We begin with the raw amino-acid sequence, 204 residues long: Recombination protein RecR (204 aa).

Residues 58–75 (CSVCQNITDVGVDPCALC) form a C4-type zinc finger. The region spanning 83–181 (SVICVVESPV…HVTKIARGIP (99 aa)) is the Toprim domain.

This sequence belongs to the RecR family.

In terms of biological role, may play a role in DNA repair. It seems to be involved in an RecBC-independent recombinational process of DNA repair. It may act with RecF and RecO. The sequence is that of Recombination protein RecR from Pelodictyon phaeoclathratiforme (strain DSM 5477 / BU-1).